A 160-amino-acid chain; its full sequence is Inorganic pyrophosphatase (160 aa).

3 residues coordinate substrate: Lys16, Arg28, and Tyr40. Residues Asp50, Asp55, and Asp87 each coordinate Mg(2+). A substrate-binding site is contributed by Tyr126.

It belongs to the PPase family. As to quaternary structure, homohexamer. The cofactor is Mg(2+).

It is found in the cytoplasm. The catalysed reaction is diphosphate + H2O = 2 phosphate + H(+). Catalyzes the hydrolysis of inorganic pyrophosphate (PPi) forming two phosphate ions. This is Inorganic pyrophosphatase from Nanoarchaeum equitans (strain Kin4-M).